Here is a 69-residue protein sequence, read N- to C-terminus: Putative membrane protein insertion efficiency factor (69 aa).

It belongs to the UPF0161 family.

It localises to the cell inner membrane. Could be involved in insertion of integral membrane proteins into the membrane. The chain is Putative membrane protein insertion efficiency factor from Nitrosomonas eutropha (strain DSM 101675 / C91 / Nm57).